The following is a 294-amino-acid chain: Protoheme IX farnesyltransferase (294 aa).

9 helical membrane-spanning segments follow: residues 22-42 (VTQLAVFCAVIGMFLATPDLP), 46-66 (IVIAATIGIWLLAGAAFAINC), 89-109 (ITVPQTLVFSGVIGGAGMWVL), 116-136 (LTMWLTFATFVGYAVIYTIIL), 143-163 (NIVIGGLSGAMPPALGWAAVA), 170-190 (AWILVLIIFIWTPPHFWALAL), 211-231 (AFTQFHIWLYTIALVATTMLP), 232-252 (FAVGMSGLIYLVVAAVLDVIF), and 272-292 (FTYSIIYLSLLFAALLVDHYL).

This sequence belongs to the UbiA prenyltransferase family. Protoheme IX farnesyltransferase subfamily.

It is found in the cell inner membrane. The catalysed reaction is heme b + (2E,6E)-farnesyl diphosphate + H2O = Fe(II)-heme o + diphosphate. It participates in porphyrin-containing compound metabolism; heme O biosynthesis; heme O from protoheme: step 1/1. Converts heme B (protoheme IX) to heme O by substitution of the vinyl group on carbon 2 of heme B porphyrin ring with a hydroxyethyl farnesyl side group. In Herminiimonas arsenicoxydans, this protein is Protoheme IX farnesyltransferase.